Reading from the N-terminus, the 317-residue chain is Transcriptional activator protein med (317 aa).

Residues 1 to 17 (MITRLVMIFSVLLLLSG) form the signal peptide. Cys18 carries the N-palmitoyl cysteine lipid modification. Cys18 is lipidated: S-diacylglycerol cysteine.

It belongs to the BMP lipoprotein family.

It localises to the cell membrane. Positive activator of the comK gene. This is Transcriptional activator protein med (med) from Bacillus subtilis (strain 168).